Here is a 520-residue protein sequence, read N- to C-terminus: Mu-like prophage FluMu protein gp29 (520 aa).

To phage Mu protein gp29.

The chain is Mu-like prophage FluMu protein gp29 from Haemophilus influenzae (strain ATCC 51907 / DSM 11121 / KW20 / Rd).